The sequence spans 1504 residues: DNA polymerase zeta catalytic subunit (1504 aa).

Residues Cys-1398, Cys-1401, Cys-1414, and Cys-1417 each coordinate Zn(2+). The CysA-type zinc finger occupies 1398–1417; it reads CCNCGEELTKICSLQLCDDC. Residues Cys-1446, Cys-1449, Cys-1468, and Cys-1473 each coordinate [4Fe-4S] cluster. A CysB motif motif is present at residues 1446–1473; that stretch reads CRTCSYRYTSDAGIENDHIASKCNSYDC.

The protein belongs to the DNA polymerase type-B family. In terms of assembly, forms DNA polymerase zeta with REV7. It depends on [4Fe-4S] cluster as a cofactor.

It is found in the mitochondrion. The protein localises to the nucleus. The enzyme catalyses DNA(n) + a 2'-deoxyribonucleoside 5'-triphosphate = DNA(n+1) + diphosphate. In terms of biological role, nonessential DNA polymerase. Required for DNA damage induced mutagenesis. Involved in DNA repair, mitochondrial DNA repair and translesion synthesis. Translesion synthesis in S.cerevisiae may use a specialized DNA polymerase that is not required for other DNA replicative processes. Has a role in the bypass of abasic (AP) sites. Highly inefficient in incorporating nucleotides opposite the AP site, but efficiently extends from nucleotides, particularly an A, inserted opposite the lesion. The protein is DNA polymerase zeta catalytic subunit (REV3) of Saccharomyces cerevisiae (strain ATCC 204508 / S288c) (Baker's yeast).